The chain runs to 157 residues: Dihydrofolate reductase type 6 (157 aa).

The DHFR domain occupies 2–156 (KISLMAAVSE…IDYTYQIWAK (155 aa)).

This sequence belongs to the dihydrofolate reductase family. As to quaternary structure, homodimer.

The catalysed reaction is (6S)-5,6,7,8-tetrahydrofolate + NADP(+) = 7,8-dihydrofolate + NADPH + H(+). It participates in cofactor biosynthesis; tetrahydrofolate biosynthesis; 5,6,7,8-tetrahydrofolate from 7,8-dihydrofolate: step 1/1. Key enzyme in folate metabolism. Catalyzes an essential reaction for de novo glycine and purine synthesis, and for DNA precursor synthesis. The protein is Dihydrofolate reductase type 6 (dhfrVI) of Proteus mirabilis.